The following is a 491-amino-acid chain: Probable malate:quinone oxidoreductase (491 aa).

The protein belongs to the MQO family. Requires FAD as cofactor.

It catalyses the reaction (S)-malate + a quinone = a quinol + oxaloacetate. It functions in the pathway carbohydrate metabolism; tricarboxylic acid cycle; oxaloacetate from (S)-malate (quinone route): step 1/1. In Leifsonia xyli subsp. xyli (strain CTCB07), this protein is Probable malate:quinone oxidoreductase.